The following is a 461-amino-acid chain: Serine/threonine-protein kinase 4 homolog A (461 aa).

The Protein kinase domain maps to 20 to 273 (FTIVEKLGEG…AEELLKHPFI (254 aa)). ATP contacts are provided by residues 26–34 (LGEGSYGSV) and lysine 49. The active-site Proton acceptor is the aspartate 139. Threonine 173 is subject to Phosphothreonine; by autocatalysis. Disordered regions lie at residues 303–349 (GIEQ…EEYD) and 369–388 (NDDE…SNKK). A compositionally biased stretch (acidic residues) spans 307–322 (RDEEEEDEDEDSEDSD). The SARAH domain occupies 411–458 (SDKYSSYSLEELKKMLAELEIEREKEVQKTLEKFSINRQALLAVIDEK).

This sequence belongs to the protein kinase superfamily. STE Ser/Thr protein kinase family. STE20 subfamily. Requires Mn(2+) as cofactor. Undergoes autophosphorylation in the catalytic domain.

The protein resides in the cytoplasm. It localises to the cytosol. It carries out the reaction L-seryl-[protein] + ATP = O-phospho-L-seryl-[protein] + ADP + H(+). It catalyses the reaction L-threonyl-[protein] + ATP = O-phospho-L-threonyl-[protein] + ADP + H(+). Regulates both cAMP signaling during early development and the stress response. Functions as an activator of adenylylcyclase. The chain is Serine/threonine-protein kinase 4 homolog A (krsA) from Dictyostelium discoideum (Social amoeba).